The primary structure comprises 248 residues: Proteasome subunit alpha (248 aa).

N-acetylserine; partial is present on S2.

It belongs to the peptidase T1A family. As to quaternary structure, the 20S proteasome core is composed of 14 alpha and 14 beta subunits that assemble into four stacked heptameric rings, resulting in a barrel-shaped structure. The two inner rings, each composed of seven catalytic beta subunits, are sandwiched by two outer rings, each composed of seven alpha subunits. The catalytic chamber with the active sites is on the inside of the barrel. Has a gated structure, the ends of the cylinder being occluded by the N-termini of the alpha-subunits. Is capped by the proteasome-associated ATPase, ARC.

The protein resides in the cytoplasm. The protein operates within protein degradation; proteasomal Pup-dependent pathway. The formation of the proteasomal ATPase ARC-20S proteasome complex, likely via the docking of the C-termini of ARC into the intersubunit pockets in the alpha-rings, may trigger opening of the gate for substrate entry. Interconversion between the open-gate and close-gate conformations leads to a dynamic regulation of the 20S proteasome proteolysis activity. Functionally, component of the proteasome core, a large protease complex with broad specificity involved in protein degradation. The polypeptide is Proteasome subunit alpha (Mycobacterium tuberculosis (strain CDC 1551 / Oshkosh)).